The following is a 333-amino-acid chain: Ribosomal RNA small subunit methyltransferase H (333 aa).

Residues 42 to 44 (GGH), Asp-62, Phe-86, Asp-105, and Gln-112 contribute to the S-adenosyl-L-methionine site.

Belongs to the methyltransferase superfamily. RsmH family.

It is found in the cytoplasm. It carries out the reaction cytidine(1402) in 16S rRNA + S-adenosyl-L-methionine = N(4)-methylcytidine(1402) in 16S rRNA + S-adenosyl-L-homocysteine + H(+). Specifically methylates the N4 position of cytidine in position 1402 (C1402) of 16S rRNA. The protein is Ribosomal RNA small subunit methyltransferase H of Cupriavidus necator (strain ATCC 17699 / DSM 428 / KCTC 22496 / NCIMB 10442 / H16 / Stanier 337) (Ralstonia eutropha).